Here is a 338-residue protein sequence, read N- to C-terminus: Glycerol-3-phosphate dehydrogenase [NAD(P)+] (338 aa).

NADPH is bound by residues Ser13, Trp14, and Lys108. Residues Lys108, Gly139, and Ser141 each coordinate sn-glycerol 3-phosphate. NADPH is bound at residue Ala143. Residues Lys194, Asp247, Ser257, Arg258, and Asn259 each contribute to the sn-glycerol 3-phosphate site. The Proton acceptor role is filled by Lys194. Arg258 lines the NADPH pocket. The NADPH site is built by Val282 and Glu284.

It belongs to the NAD-dependent glycerol-3-phosphate dehydrogenase family.

The protein localises to the cytoplasm. The catalysed reaction is sn-glycerol 3-phosphate + NAD(+) = dihydroxyacetone phosphate + NADH + H(+). The enzyme catalyses sn-glycerol 3-phosphate + NADP(+) = dihydroxyacetone phosphate + NADPH + H(+). The protein operates within membrane lipid metabolism; glycerophospholipid metabolism. Its function is as follows. Catalyzes the reduction of the glycolytic intermediate dihydroxyacetone phosphate (DHAP) to sn-glycerol 3-phosphate (G3P), the key precursor for phospholipid synthesis. This is Glycerol-3-phosphate dehydrogenase [NAD(P)+] from Streptococcus pneumoniae (strain JJA).